We begin with the raw amino-acid sequence, 251 residues long: Probable transcriptional regulatory protein jk1057 (251 aa).

The disordered stretch occupies residues M1–G22.

This sequence belongs to the TACO1 family.

It localises to the cytoplasm. This Corynebacterium jeikeium (strain K411) protein is Probable transcriptional regulatory protein jk1057.